Consider the following 535-residue polypeptide: Peptide chain release factor 3 (535 aa).

Residues 8–278 enclose the tr-type G domain; the sequence is ARRRTFAIIS…VDQAPAPGPR (271 aa). GTP is bound by residues 17–24, 85–89, and 139–142; these read SHPDAGKT, DTPGH, and NKLD.

This sequence belongs to the TRAFAC class translation factor GTPase superfamily. Classic translation factor GTPase family. PrfC subfamily.

The protein resides in the cytoplasm. In terms of biological role, increases the formation of ribosomal termination complexes and stimulates activities of RF-1 and RF-2. It binds guanine nucleotides and has strong preference for UGA stop codons. It may interact directly with the ribosome. The stimulation of RF-1 and RF-2 is significantly reduced by GTP and GDP, but not by GMP. This Bordetella bronchiseptica (strain ATCC BAA-588 / NCTC 13252 / RB50) (Alcaligenes bronchisepticus) protein is Peptide chain release factor 3.